A 571-amino-acid chain; its full sequence is ATP-dependent RNA helicase RhlB (571 aa).

Residues 9–37 carry the Q motif motif; the sequence is VTFSSFDLHPALIAGLESAGFTRCTPIQA. In terms of domain architecture, Helicase ATP-binding spans 40–220; that stretch reads LPVALPGGDV…YEHMNEPEKL (181 aa). 53–60 is an ATP binding site; it reads AQTGTGKT. The DEAD box motif lies at 166–169; the sequence is DEAD. Residues 231–393 enclose the Helicase C-terminal domain; the sequence is RVRQRIYFPS…PVTSELLTPL (163 aa). Positions 391–558 are disordered; it reads TPLPRAPRVP…KPSGSPSLLS (168 aa). The segment covering 402-411 has biased composition (acidic residues); sequence EGEEADDDAG. Over residues 419 to 432 the composition is skewed to basic and acidic residues; that stretch reads REAREQRAAEEQRR. Residues 435–448 are compositionally biased toward gly residues; sequence GRGGPGGSRSGSGG. Positions 449-460 are enriched in basic and acidic residues; that stretch reads GRRDGAGADGKP. The span at 483–497 shows a compositional bias: low complexity; sequence VVAAVAAQAPSAGVA. The span at 503-512 shows a compositional bias: basic residues; the sequence is PRKRRRRRNG. Positions 539-558 are enriched in low complexity; it reads VVAKPVRAAAKPSGSPSLLS.

Belongs to the DEAD box helicase family. RhlB subfamily. Component of the RNA degradosome, which is a multiprotein complex involved in RNA processing and mRNA degradation.

The protein resides in the cytoplasm. It catalyses the reaction ATP + H2O = ADP + phosphate + H(+). DEAD-box RNA helicase involved in RNA degradation. Has RNA-dependent ATPase activity and unwinds double-stranded RNA. This Xanthomonas axonopodis pv. citri (strain 306) protein is ATP-dependent RNA helicase RhlB.